The following is a 122-amino-acid chain: MIQQETRLKVADNSGAREILTIKVLGGSGHKFANIGDVIVASVKQATPGGAVKKGDVVKAVIVRTKTGARRPDGSYIKFDDNAAVIIRDDKTPRGTRIFGPVARELREGGYMKIVSLAPEVL.

The protein belongs to the universal ribosomal protein uL14 family. Part of the 50S ribosomal subunit. Forms a cluster with proteins L3 and L19. In the 70S ribosome, L14 and L19 interact and together make contacts with the 16S rRNA in bridges B5 and B8.

Its function is as follows. Binds to 23S rRNA. Forms part of two intersubunit bridges in the 70S ribosome. This chain is Large ribosomal subunit protein uL14, found in Streptococcus pyogenes serotype M2 (strain MGAS10270).